We begin with the raw amino-acid sequence, 343 residues long: Ribosomal RNA small subunit methyltransferase H (343 aa).

Residues 39-41 (AGH), Asp-58, Phe-87, Asp-108, and Gln-115 each bind S-adenosyl-L-methionine.

It belongs to the methyltransferase superfamily. RsmH family.

It localises to the cytoplasm. It catalyses the reaction cytidine(1402) in 16S rRNA + S-adenosyl-L-methionine = N(4)-methylcytidine(1402) in 16S rRNA + S-adenosyl-L-homocysteine + H(+). In terms of biological role, specifically methylates the N4 position of cytidine in position 1402 (C1402) of 16S rRNA. This is Ribosomal RNA small subunit methyltransferase H from Bifidobacterium adolescentis (strain ATCC 15703 / DSM 20083 / NCTC 11814 / E194a).